The sequence spans 653 residues: DUF21 domain-containing protein At1g55930, chloroplastic (653 aa).

Residues 1 to 72 constitute a chloroplast transit peptide; the sequence is MELDLSVLGR…DFSHRCQFVV (72 aa). 5 helical membrane passes run 103–123, 157–177, 208–228, 234–254, and 280–300; these read GIVLGAVVCGVLFYGCGKVLA, GLILAVLLGLSAFFSMAETSI, FLTTILIGTTVVNIAATALVT, IFGEAGVSAATGVMTVAILLL, and WLSLILYPVGRVVTYLSMGIL. The CNNM transmembrane domain maps to 149 to 335; the sequence is VLKVLREQGL…ELSGAIEEEE (187 aa). CBS domains lie at 354 to 415 and 421 to 479; these read MTPL…LLES and MAHK…IFDE.

The protein resides in the plastid. It localises to the chloroplast membrane. This Arabidopsis thaliana (Mouse-ear cress) protein is DUF21 domain-containing protein At1g55930, chloroplastic (CBSDUFCH2).